A 703-amino-acid polypeptide reads, in one-letter code: Zinc finger protein 750 (703 aa).

The CCHC-type zinc-finger motif lies at 25–51 (YKCFQCPFTCNEKSHLFNHMKYGLCKN). Residues Cys-27, Cys-30, His-43, and Cys-49 each contribute to the Zn(2+) site. 4 disordered regions span residues 64–113 (KCPK…DAKE), 350–527 (PASS…YGPM), 553–614 (WAPR…KQTA), and 630–703 (RVAD…TRVS). Over residues 67-106 (KSSSLDPKQTHQPEPTSKPATSKSLLNGLSSFDPKSQQGS) the composition is skewed to polar residues. The span at 352-361 (SSPSELNLSS) shows a compositional bias: low complexity. Residues 367 to 394 (TECEKGSPVPEAKDPSKDGQRDAEEAKM) show a composition bias toward basic and acidic residues. Composition is skewed to polar residues over residues 410–421 (SPTNFTQTSQTF) and 456–477 (GSES…SLQA). Positions 574–611 (TETKGSEDRTSRVETPQDKAHSRTTPDVHTEDSSDEQK) are enriched in basic and acidic residues. Polar residues predominate over residues 639–655 (QEPTRQDVPTLSATENL).

The protein localises to the nucleus. Functionally, transcription factor involved in epidermis differentiation. Required for terminal epidermal differentiation: acts downstream of p63/TP63 and activates expression of late epidermal differentiation genes. Specifically binds to the promoter of KLF4 and promotes its expression. The chain is Zinc finger protein 750 (Znf750) from Mus musculus (Mouse).